The sequence spans 386 residues: Porin PorA (386 aa).

An N-terminal signal peptide occupies residues 1–35 (MKRTLGHALIIIGAALIVIAVLLPTFLVPRLRVIP). The segment covering 53–63 (DSSQLGKNEPT) has biased composition (polar residues). A disordered region spans residues 53–78 (DSSQLGKNEPTPNRKNDPRCKAETDE). Residues 64–78 (PNRKNDPRCKAETDE) are compositionally biased toward basic and acidic residues.

The protein belongs to the PorA family.

It is found in the secreted. Its subcellular location is the cell wall. Functionally, forms water-filled channels that favor the permeation of cations. The chain is Porin PorA from Corynebacterium amycolatum.